We begin with the raw amino-acid sequence, 844 residues long: E3 ubiquitin-protein ligase BRE1-like 2 (844 aa).

Coiled coils occupy residues 1–38 and 160–240; these read MDAA…RDEQ and EDVI…QLQT. The disordered stretch occupies residues 244-269; it reads SLMNTSAPNGVNGSVSTDKSSDKGMG. The segment covering 245 to 261 has biased composition (polar residues); sequence LMNTSAPNGVNGSVSTD. 2 coiled-coil regions span residues 290–604 and 640–670; these read ELHE…SEIE and KMKQ…ESSK. The RING-type zinc-finger motif lies at 792–831; that stretch reads CGVCFDRPKEVVITKCFHLFCSPCIQRNLEIRHRKCPGCG.

Belongs to the BRE1 family.

It localises to the nucleus. It carries out the reaction S-ubiquitinyl-[E2 ubiquitin-conjugating enzyme]-L-cysteine + [acceptor protein]-L-lysine = [E2 ubiquitin-conjugating enzyme]-L-cysteine + N(6)-ubiquitinyl-[acceptor protein]-L-lysine.. The protein operates within protein modification; protein ubiquitination. Functionally, E3 ubiquitin-protein ligase that monoubiquitinates H2B to form H2BK143ub1. H2BK143ub1 gives a specific tag for epigenetic transcriptional activation and is also prerequisite for H3K4me and maybe H3K79me. It thereby plays a central role in histone code and gene regulation. Forms a ubiquitin ligase complex in cooperation with the E2 enzyme UBC2/RAD6. The chain is E3 ubiquitin-protein ligase BRE1-like 2 (BRE1B) from Oryza sativa subsp. indica (Rice).